We begin with the raw amino-acid sequence, 227 residues long: Ribose-5-phosphate isomerase A (227 aa).

Substrate is bound by residues 28–31 (TGST), 81–84 (DGAD), and 94–97 (KGGG). The active-site Proton acceptor is the Glu103. Lys121 contributes to the substrate binding site.

It belongs to the ribose 5-phosphate isomerase family. As to quaternary structure, homodimer.

The catalysed reaction is aldehydo-D-ribose 5-phosphate = D-ribulose 5-phosphate. The protein operates within carbohydrate degradation; pentose phosphate pathway; D-ribose 5-phosphate from D-ribulose 5-phosphate (non-oxidative stage): step 1/1. Catalyzes the reversible conversion of ribose-5-phosphate to ribulose 5-phosphate. This chain is Ribose-5-phosphate isomerase A, found in Caulobacter vibrioides (strain ATCC 19089 / CIP 103742 / CB 15) (Caulobacter crescentus).